Reading from the N-terminus, the 370-residue chain is 3-isopropylmalate dehydrogenase (370 aa).

Residue 77-90 coordinates NAD(+); it reads GPKWDGVPYDARPE. Substrate-binding residues include Arg97, Arg107, Arg135, and Asp226. Positions 226, 250, and 254 each coordinate Mg(2+). 290–302 is an NAD(+) binding site; that stretch reads GSAPDIAGKGMAN.

It belongs to the isocitrate and isopropylmalate dehydrogenases family. LeuB type 1 subfamily. As to quaternary structure, homodimer. The cofactor is Mg(2+). Mn(2+) serves as cofactor.

The protein localises to the cytoplasm. The catalysed reaction is (2R,3S)-3-isopropylmalate + NAD(+) = 4-methyl-2-oxopentanoate + CO2 + NADH. It participates in amino-acid biosynthesis; L-leucine biosynthesis; L-leucine from 3-methyl-2-oxobutanoate: step 3/4. Functionally, catalyzes the oxidation of 3-carboxy-2-hydroxy-4-methylpentanoate (3-isopropylmalate) to 3-carboxy-4-methyl-2-oxopentanoate. The product decarboxylates to 4-methyl-2 oxopentanoate. The polypeptide is 3-isopropylmalate dehydrogenase (Rhodopseudomonas palustris (strain ATCC BAA-98 / CGA009)).